The sequence spans 245 residues: Orotidine 5'-phosphate decarboxylase (245 aa).

Residues D22, K44, 71 to 80 (DLKFHDIPNT), T131, R192, Q201, G221, and R222 contribute to the substrate site. The active-site Proton donor is the K73.

It belongs to the OMP decarboxylase family. Type 1 subfamily. As to quaternary structure, homodimer.

The catalysed reaction is orotidine 5'-phosphate + H(+) = UMP + CO2. It functions in the pathway pyrimidine metabolism; UMP biosynthesis via de novo pathway; UMP from orotate: step 2/2. Catalyzes the decarboxylation of orotidine 5'-monophosphate (OMP) to uridine 5'-monophosphate (UMP). The sequence is that of Orotidine 5'-phosphate decarboxylase from Shigella flexneri.